The following is a 59-amino-acid chain: Large ribosomal subunit protein uL30 (59 aa).

It belongs to the universal ribosomal protein uL30 family. As to quaternary structure, part of the 50S ribosomal subunit.

In Haemophilus influenzae (strain 86-028NP), this protein is Large ribosomal subunit protein uL30.